Consider the following 395-residue polypeptide: MDFTENEEEYEHWTHIERRVPFQGYRTYVASTYISFNVVGFVINAWVLYVVAPLLFAPAIKVPKSILFYIFALCVGDLMTMIAMLLLVIELVFGTWQFSSMVCTSYLIFDSMNKFMAPMIVFLISRTCYSTVCLDKTRGEKAATLKYAIIQFCIAFAFVMILLWPVFAYSQVFTFYMNPNSTAQEVTVMRKCGFFPPPQIEFWFNLIACITSYAVPLFGIIYWYVSVPFFLKRRALTTLVASSSMDAALRKVITTVLLLTVIYVLCWTPYWVSMFANRIWIMEKKSIIIISYFIHLLPYISCVAYPLIFTLLNRGIRSAHAKIVADQRRRFRSLTDEASSQIRTAIRTIPGTKMKKNEFLTRTEEISSDKIASEAVSEFREGLPSQTSFPDETLL.

Helical transmembrane passes span 38–58 (VVGF…LFAP), 66–86 (ILFY…AMLL), 89–109 (IELV…YLIF), and 148–168 (AIIQ…PVFA). A glycan (N-linked (GlcNAc...) asparagine) is linked at N180. 3 helical membrane-spanning segments follow: residues 202–222 (FWFN…GIIY), 252–272 (VITT…PYWV), and 287–307 (IIII…AYPL).

The protein belongs to the G-protein coupled receptor 1 family.

The protein resides in the cell membrane. Functionally, not known. Putative receptor. The chain is Probable G-protein coupled receptor npr-29 from Caenorhabditis elegans.